The sequence spans 212 residues: Cytidylate kinase (212 aa).

7-15 (GPAASGKGT) is a binding site for ATP.

Belongs to the cytidylate kinase family. Type 1 subfamily.

The protein localises to the cytoplasm. The enzyme catalyses CMP + ATP = CDP + ADP. The catalysed reaction is dCMP + ATP = dCDP + ADP. In Rhodopseudomonas palustris (strain BisB18), this protein is Cytidylate kinase.